Here is a 951-residue protein sequence, read N- to C-terminus: Valine--tRNA ligase (951 aa).

Residues 42-52 (PNVTGSLHMGH) carry the 'HIGH' region motif. The 'KMSKS' region signature appears at 554-558 (KMSKS). ATP is bound at residue lysine 557. Residues 880–944 (AGLINKEDEL…AEAKAKLIEQ (65 aa)) are a coiled coil.

This sequence belongs to the class-I aminoacyl-tRNA synthetase family. ValS type 1 subfamily. As to quaternary structure, monomer.

Its subcellular location is the cytoplasm. It catalyses the reaction tRNA(Val) + L-valine + ATP = L-valyl-tRNA(Val) + AMP + diphosphate. In terms of biological role, catalyzes the attachment of valine to tRNA(Val). As ValRS can inadvertently accommodate and process structurally similar amino acids such as threonine, to avoid such errors, it has a 'posttransfer' editing activity that hydrolyzes mischarged Thr-tRNA(Val) in a tRNA-dependent manner. The sequence is that of Valine--tRNA ligase from Shigella dysenteriae serotype 1 (strain Sd197).